The following is a 479-amino-acid chain: Adenosylhomocysteinase (479 aa).

Residues Thr-66, Asp-142, and Glu-203 each contribute to the substrate site. Position 204–206 (204–206) interacts with NAD(+); it reads TTT. Residues Lys-233 and Asp-237 each contribute to the substrate site. NAD(+) contacts are provided by residues Asn-238, 267–272, Glu-290, Asn-325, 346–348, and Asn-394; these read GYGDVG and IGH.

It belongs to the adenosylhomocysteinase family. The cofactor is NAD(+).

It localises to the cytoplasm. The enzyme catalyses S-adenosyl-L-homocysteine + H2O = L-homocysteine + adenosine. Its pathway is amino-acid biosynthesis; L-homocysteine biosynthesis; L-homocysteine from S-adenosyl-L-homocysteine: step 1/1. Functionally, may play a key role in the regulation of the intracellular concentration of adenosylhomocysteine. This Oleidesulfovibrio alaskensis (strain ATCC BAA-1058 / DSM 17464 / G20) (Desulfovibrio alaskensis) protein is Adenosylhomocysteinase.